The following is a 277-amino-acid chain: 2,3,4,5-tetrahydropyridine-2,6-dicarboxylate N-succinyltransferase (277 aa).

Positions 106 and 143 each coordinate substrate.

Belongs to the transferase hexapeptide repeat family. Homotrimer.

The protein resides in the cytoplasm. The catalysed reaction is (S)-2,3,4,5-tetrahydrodipicolinate + succinyl-CoA + H2O = (S)-2-succinylamino-6-oxoheptanedioate + CoA. It participates in amino-acid biosynthesis; L-lysine biosynthesis via DAP pathway; LL-2,6-diaminopimelate from (S)-tetrahydrodipicolinate (succinylase route): step 1/3. This chain is 2,3,4,5-tetrahydropyridine-2,6-dicarboxylate N-succinyltransferase, found in Variovorax paradoxus (strain S110).